Here is a 739-residue protein sequence, read N- to C-terminus: Sulfate transporter (739 aa).

Basic and acidic residues-rich tracts occupy residues 1–17 (MSSE…RDLP) and 31–46 (TQRR…ETGH). The tract at residues 1–47 (MSSENKEQHDLSPRDLPEEAFGFPSELPLETQRRSGTDLRQSETGHG) is disordered. A Phosphoserine modification is found at Ser-12. Helical transmembrane passes span 112 to 132 (VMSG…YSLL) and 137 to 157 (PIYG…FGTS). A glycan (N-linked (GlcNAc...) asparagine) is linked at Asn-205. 2 helical membrane passes run 227 to 247 (FMAG…VSVY) and 255 to 275 (GFVT…LLGL). Asn-357 carries N-linked (GlcNAc...) asparagine glycosylation. A run of 4 helical transmembrane segments spans residues 378-398 (LIPN…AITV), 420-440 (AIGF…SAAL), 455-475 (LSAI…APLF), and 524-544 (LLST…CVIL). Positions 568-719 (TYKNLRSKSG…YSLSEAVAFA (152 aa)) constitute an STAS domain.

This sequence belongs to the SLC26A/SulP transporter (TC 2.A.53) family. Post-translationally, N-glycosylated. In terms of tissue distribution, distributed mainly in the thymus, testis and osteoblastic cells. Highly expressed in the bone, cartilage, kidney and colon.

Its subcellular location is the cell membrane. The protein resides in the apical cell membrane. The catalysed reaction is oxalate(in) + sulfate(out) = oxalate(out) + sulfate(in). It carries out the reaction sulfate(out) + 2 chloride(in) = sulfate(in) + 2 chloride(out). It catalyses the reaction oxalate(out) + 2 chloride(in) = oxalate(in) + 2 chloride(out). The enzyme catalyses bromide(in) + chloride(out) = bromide(out) + chloride(in). The catalysed reaction is nitrate(in) + chloride(out) = nitrate(out) + chloride(in). It carries out the reaction iodide(in) + chloride(out) = iodide(out) + chloride(in). In terms of biological role, sulfate transporter which mediates sulfate uptake into chondrocytes in order to maintain adequate sulfation of proteoglycans which is needed for cartilage development. Mediates electroneutral anion exchange of sulfate ions for oxalate ions, sulfate and oxalate ions for chloride and/or hydroxyl ions and chloride ions for bromide, iodide and nitrate ions. The coupling of sulfate transport to both hydroxyl and chloride ions likely serves to ensure transport at both acidic pH when most sulfate uptake is mediated by sulfate-hydroxide exchange and alkaline pH when most sulfate uptake is mediated by sulfate-chloride exchange. Essential for chondrocyte proliferation, differentiation and cell size expansion. This chain is Sulfate transporter (Slc26a2), found in Mus musculus (Mouse).